The chain runs to 118 residues: Large ribosomal subunit protein uL18 (118 aa).

The tract at residues 1–25 (MITKPDKNKVRQKRHRRVRGKLSGT) is disordered. Basic residues predominate over residues 10–20 (VRQKRHRRVRG).

This sequence belongs to the universal ribosomal protein uL18 family. Part of the 50S ribosomal subunit; part of the 5S rRNA/L5/L18/L25 subcomplex. Contacts the 5S and 23S rRNAs.

Functionally, this is one of the proteins that bind and probably mediate the attachment of the 5S RNA into the large ribosomal subunit, where it forms part of the central protuberance. The protein is Large ribosomal subunit protein uL18 of Streptococcus gordonii (strain Challis / ATCC 35105 / BCRC 15272 / CH1 / DL1 / V288).